Here is a 251-residue protein sequence, read N- to C-terminus: Long tail fiber protein Gp37 (251 aa).

An interaction with the receptor-recognizing protein gp38 region spans residues 134–137 (DVYI). Residues 139 to 237 (SDGRLKINKK…EEIKELKTPL (99 aa)) enclose the Peptidase S74 domain.

Belongs to the S16-like long tail fiber protein Gp37 family. As to quaternary structure, homotrimer. Interacts with the receptor-recognizing protein Gp38. Post-translationally, proteolytic cleavage and release of the chaperone in the host cytosol stabilizes the folded protein.

It is found in the virion. In terms of biological role, constitues the trimeric tip of the long tail fiber that mediates the attachment to the host receptor, together with the receptor-recognizing protein Gp38. The C-terminal chaperone protein mediates homotrimerization and proper folding of the catalytic trimer. This Selenomonas ruminantium (Bacteriophage M1) protein is Long tail fiber protein Gp37 (37).